The chain runs to 425 residues: Perilipin-2 (425 aa).

An N-acetylalanine modification is found at Ala-2. At Ser-213 the chain carries Phosphoserine. Tyr-230 carries the phosphotyrosine modification.

The protein belongs to the perilipin family. Interacts with IRGC. Post-translationally, acylated; primarily with C14, C16 and C18 fatty acids. Phosphorylation at Tyr-230 by isoform 1 of CHKA (CHKalpha2) promotes dissociation from lipid droplets: dissociation is followed by recruitment of autophagosome machinery to lipid droplets and subsequent lipid droplet lipolysis. In terms of processing, polyubiquitination of Nt-acetylatable A-PLIN2 by MARCHF6 lead to degradation by 26S proteasomes. Adipose tissue specific. Expressed abundantly and preferentially in fat pads.

The protein resides in the membrane. It is found in the lipid droplet. Its function is as follows. Structural component of lipid droplets, which is required for the formation and maintenance of lipid storage droplets. In Mus musculus (Mouse), this protein is Perilipin-2.